A 398-amino-acid polypeptide reads, in one-letter code: Probable pectate lyase P56 (398 aa).

An N-terminal signal peptide occupies residues 1 to 27 (MEYSYRTKINVLFIVLILFVFAALGTA). An N-linked (GlcNAc...) asparagine glycan is attached at Asn135. Ca(2+)-binding residues include Asp192, Asp217, and Asp221. N-linked (GlcNAc...) asparagine glycosylation occurs at Asn228. Arg273 is an active-site residue.

It belongs to the polysaccharide lyase 1 family. The cofactor is Ca(2+). As to expression, expressed in anthers and pollen.

The enzyme catalyses Eliminative cleavage of (1-&gt;4)-alpha-D-galacturonan to give oligosaccharides with 4-deoxy-alpha-D-galact-4-enuronosyl groups at their non-reducing ends.. It participates in glycan metabolism; pectin degradation; 2-dehydro-3-deoxy-D-gluconate from pectin: step 2/5. Functionally, might be needed during pollen development and tube growth. The polypeptide is Probable pectate lyase P56 (LAT56) (Solanum lycopersicum (Tomato)).